The chain runs to 388 residues: Succinate--CoA ligase [ADP-forming] subunit beta (388 aa).

In terms of domain architecture, ATP-grasp spans 9 to 244 (KQLFARYGMP…PSQEDAREAH (236 aa)). ATP contacts are provided by residues Lys-46, 53–55 (GRG), Glu-99, Thr-102, and Glu-107. Mg(2+) is bound by residues Asn-199 and Asp-213. Substrate contacts are provided by residues Asn-264 and 321–323 (GIV).

The protein belongs to the succinate/malate CoA ligase beta subunit family. Heterotetramer of two alpha and two beta subunits. Mg(2+) serves as cofactor.

It catalyses the reaction succinate + ATP + CoA = succinyl-CoA + ADP + phosphate. It carries out the reaction GTP + succinate + CoA = succinyl-CoA + GDP + phosphate. It participates in carbohydrate metabolism; tricarboxylic acid cycle; succinate from succinyl-CoA (ligase route): step 1/1. Succinyl-CoA synthetase functions in the citric acid cycle (TCA), coupling the hydrolysis of succinyl-CoA to the synthesis of either ATP or GTP and thus represents the only step of substrate-level phosphorylation in the TCA. The beta subunit provides nucleotide specificity of the enzyme and binds the substrate succinate, while the binding sites for coenzyme A and phosphate are found in the alpha subunit. The sequence is that of Succinate--CoA ligase [ADP-forming] subunit beta from Yersinia pseudotuberculosis serotype O:1b (strain IP 31758).